The sequence spans 89 residues: Large ribosomal subunit protein eL43 (89 aa).

Residues cysteine 38, cysteine 41, cysteine 56, and cysteine 59 each coordinate Zn(2+). The segment at 38–59 (CPVCHKRAVKRVGTGIWRCTKC) adopts a C4-type zinc-finger fold.

Belongs to the eukaryotic ribosomal protein eL43 family. Putative zinc-binding subfamily. Part of the 50S ribosomal subunit. The cofactor is Zn(2+).

Functionally, binds to the 23S rRNA. In Methanopyrus kandleri (strain AV19 / DSM 6324 / JCM 9639 / NBRC 100938), this protein is Large ribosomal subunit protein eL43.